The sequence spans 86 residues: Putative membrane protein insertion efficiency factor (86 aa).

The disordered stretch occupies residues 66–86; that stretch reads FSKGGFDPVPPHDGVPGKKED.

Belongs to the UPF0161 family.

The protein localises to the cell inner membrane. Could be involved in insertion of integral membrane proteins into the membrane. In Chlorobium luteolum (strain DSM 273 / BCRC 81028 / 2530) (Pelodictyon luteolum), this protein is Putative membrane protein insertion efficiency factor.